A 394-amino-acid polypeptide reads, in one-letter code: Queuine tRNA-ribosyltransferase accessory subunit 2 (394 aa).

Residues cysteine 336, cysteine 338, cysteine 341, and histidine 367 each coordinate Zn(2+).

Belongs to the queuine tRNA-ribosyltransferase family. QTRT2 subfamily. As to quaternary structure, heterodimer of a catalytic subunit and an accessory subunit. Zn(2+) serves as cofactor.

The protein resides in the cytoplasm. In terms of biological role, non-catalytic subunit of the queuine tRNA-ribosyltransferase (TGT) that catalyzes the base-exchange of a guanine (G) residue with queuine (Q) at position 34 (anticodon wobble position) in tRNAs with GU(N) anticodons (tRNA-Asp, -Asn, -His and -Tyr), resulting in the hypermodified nucleoside queuosine (7-(((4,5-cis-dihydroxy-2-cyclopenten-1-yl)amino)methyl)-7-deazaguanosine). This chain is Queuine tRNA-ribosyltransferase accessory subunit 2, found in Ixodes scapularis (Black-legged tick).